A 3010-amino-acid polypeptide reads, in one-letter code: Genome polyprotein (3010 aa).

Ser-2 carries the N-acetylserine; by host modification. The interaction with STAT1 stretch occupies residues 2–23 (STNPKPQRKTKRNTNRRPQDVK). An interaction with EIF2AK2/PKR region spans residues 2-58 (STNPKPQRKTKRNTNRRPQDVKFPGGGQIVGGVYLLPRRGPRLGVRATRKTSERSQP). The tract at residues 2-59 (STNPKPQRKTKRNTNRRPQDVKFPGGGQIVGGVYLLPRRGPRLGVRATRKTSERSQPR) is interaction with DDX3X. The segment at 2–75 (STNPKPQRKT…PKARRPEGRT (74 aa)) is disordered. Topologically, residues 2 to 168 (STNPKPQRKT…EDGVNYATGN (167 aa)) are cytoplasmic. 2 consecutive short sequence motifs (nuclear localization signal) follow at residues 5-13 (PKPQRKTKR) and 38-43 (PRRGPR). A compositionally biased stretch (basic residues) spans 7 to 16 (PQRKTKRNTN). A compositionally biased stretch (low complexity) spans 32–47 (GGVYLLPRRGPRLGVR). Ser-53 carries the phosphoserine; by host modification. 2 short sequence motifs (nuclear localization signal) span residues 58–64 (PRGRRQP) and 66–71 (PKARRP). Over residues 58 to 68 (PRGRRQPIPKA) the composition is skewed to basic residues. Ser-99 carries the phosphoserine; by host modification. Positions 112–152 (PRRRSRNLGKVIDTLTCGFADLMGYIPLVGAPLGGAARALA) are important for endoplasmic reticulum and mitochondrial localization. A Phosphoserine; by host PKA modification is found at Ser-116. Residues 122–173 (VIDTLTCGFADLMGYIPLVGAPLGGAARALAHGVRVLEDGVNYATGNLPGCS) form an interaction with APOA2 region. The segment at 164–167 (YATG) is important for lipid droplets localization. Residues 169–189 (LPGCSFSIFLLALLSCLTIPA) form a helical membrane-spanning segment. Positions 178–191 (LLALLSCLTIPASA) are cleaved as a propeptide — ER anchor for the core protein, removed in mature form by host signal peptidase. At 190–358 (SAYEVRNVSG…AGAHWGVLAG (169 aa)) the chain is on the lumenal side. 3 N-linked (GlcNAc...) asparagine; by host glycosylation sites follow: Asn-196, Asn-209, and Asn-234. Residues 265–296 (LVGAAALCSAMYVGDLCGSVFLVSQLFTFSPR) are important for fusion. Asn-305 is a glycosylation site (N-linked (GlcNAc...) asparagine; by host). Residues 359–379 (LAYYSMVGNWAKVLIVMLLFA) form a helical membrane-spanning segment. The Lumenal portion of the chain corresponds to 380–725 (GVDGHTHVTG…WEYILLLFLL (346 aa)). O-linked (Hex...) threonine; by host glycosylation is found at Thr-385 and Thr-396. The interval 385 to 411 (THVTGGRVASSTQSLVSWLSQGPSQKI) is HVR1. Ser-401 and Ser-404 each carry an O-linked (Hex...) serine; by host glycan. N-linked (GlcNAc...) (high mannose) asparagine; by host glycosylation is found at Asn-417, Asn-423, Asn-430, and Asn-448. Intrachain disulfides connect Cys-429–Cys-552, Cys-452–Cys-459, Cys-486–Cys-494, and Cys-503–Cys-508. The O-linked (Hex...) threonine; by host glycan is linked to Thr-473. Residues 474 to 482 (HDMPESSDQ) are HVR2. Positions 480-493 (SDQRPYCWHYAPRP) are CD81-binding 1. Residue Thr-518 is glycosylated (O-linked (Hex...) threonine; by host). N-linked (GlcNAc...) (high mannose) asparagine; by host glycosylation is present at Asn-532. Residues 544–551 (PPQGNWFG) form a CD81-binding 2 region. N-linked (GlcNAc...) (high mannose) asparagine; by host glycosylation occurs at Asn-556. Cys-564 and Cys-569 form a disulfide bridge. A glycan (N-linked (GlcNAc...) (high mannose) asparagine; by host) is linked at Asn-576. Disulfide bonds link Cys-581-Cys-585, Cys-597-Cys-620, and Cys-607-Cys-644. Asn-623 and Asn-645 each carry an N-linked (GlcNAc...) (high mannose) asparagine; by host glycan. Cys-652 and Cys-677 are oxidised to a cystine. Residues 660-671 (SELSPLLLSTTE) are EIF2AK2/eIF2-alpha phosphorylation homology domain (PePHD). A helical transmembrane segment spans residues 726–746 (LADARVCACLWMMLLIAQAEA). Residues 747-757 (TLENLVVLNAA) lie on the Lumenal side of the membrane. The chain crosses the membrane as a helical span at residues 758 to 778 (SVAGAHGLLSFLVFFCAAWYI). At 779–781 (KGR) the chain is on the cytoplasmic side. The helical transmembrane segment at 782 to 803 (LVPGAAYALYGVWPLLLLLLAL) threads the bilayer. The Lumenal segment spans residues 804–813 (PPRAYAMDRE). A helical transmembrane segment spans residues 814-834 (MAASCGGAVFVGLVLLTLSPY). Residues 835-838 (YKVF) are Cytoplasmic-facing. The chain crosses the membrane as a helical span at residues 839–859 (LARLIWWLQYFITRAEAHLQV). The Lumenal portion of the chain corresponds to 860–881 (WVPPLNVRGGRDAIILLTCAVH). A helical membrane pass occupies residues 882–902 (PELIFDITKLLLAILGPLMVL). The Peptidase C18 domain occupies 903–1026 (QAGITRVPYF…SFGEQGWRLL (124 aa)). Residues 903-1657 (QAGITRVPYF…CMSADLEVVT (755 aa)) lie on the Cytoplasmic side of the membrane. The tract at residues 904-1206 (AGITRVPYFV…PVESMETTMR (303 aa)) is protease NS2-3. The S-palmitoyl cysteine; by host moiety is linked to residue Cys-922. The interaction with host SCPS1 stretch occupies residues 929–949 (AGGHYVQMAFMKLAALTGTYV). Catalysis depends on for protease NS2 activity; shared with dimeric partner residues His-952, Glu-972, and Cys-993. A Peptidase S29 domain is found at 1027 to 1208 (APITAYSQQT…ESMETTMRSP (182 aa)). Active-site charge relay system; for serine protease NS3 activity residues include His-1083 and Asp-1107. Positions 1123 and 1125 each coordinate Zn(2+). Ser-1165 (charge relay system; for serine protease NS3 activity) is an active-site residue. Cys-1171 and His-1175 together coordinate Zn(2+). Positions 1217–1369 (PAVPQTFQVA…PNIEEVALSN (153 aa)) constitute a Helicase ATP-binding domain. 1230–1237 (APTGSGKS) contributes to the ATP binding site. Mg(2+) is bound by residues Ser-1237 and Glu-1317. The DECH box signature appears at 1316 to 1319 (DECH). Residues 1486 to 1497 (QRRGRTGRGRSG) form an RNA-binding region. Residues 1658-1678 (STWVLVGGVLAALAAYCLTTG) form a helical membrane-spanning segment. Positions 1679 to 1690 (SVVIVGRIILSG) are NS3-binding. At 1679–1805 (SVVIVGRIIL…SITSPLTTQN (127 aa)) the chain is on the cytoplasmic side. Residues 1806–1826 (TLLFNILGGWVAAQLAPPSAA) traverse the membrane as a helical segment. Residues 1827–1828 (SA) are Lumenal-facing. A helical transmembrane segment spans residues 1829–1849 (FVGAGIAGAAVGSIGLGKVLV). The interval 1833 to 1861 (GIAGAAVGSIGLGKVLVDILAGYGAGVAG) is glycine zipper. A topological domain (cytoplasmic) is located at residue Asp-1850. A helical membrane pass occupies residues 1851–1871 (ILAGYGAGVAGALVAFKVMSG). At 1872–1881 (EMPSTEDLVN) the chain is on the lumenal side. Residues 1882–1902 (LLPAILSPGALVVGVVCAAIL) traverse the membrane as a helical segment. Over 1903–1972 (RRHVGPGEGA…WINEDCSTPC (70 aa)) the chain is Cytoplasmic. 2 S-palmitoyl cysteine; by host lipidation sites follow: Cys-1968 and Cys-1972. The stretch at 1973 to 2002 (SGSWLKDVWDWICTVLSDFKTWLQSKLLPR) is an intramembrane region. A membrane-binding region spans residues 1978–1998 (KDVWDWICTVLSDFKTWLQSK). Over 2003–2989 (LPGLPFLSCQ…YHSLSRARPR (987 aa)) the chain is Cytoplasmic. The segment at 2005 to 2221 (GLPFLSCQRG…KATCTTHHDS (217 aa)) is RNA-binding. Zn(2+)-binding residues include Cys-2011, Cys-2029, Cys-2031, and Cys-2052. Positions 2120–2208 (EFFTEVDGVR…ASSSASQLSA (89 aa)) are FKBP8-binding. A transcriptional activation region spans residues 2120–2332 (EFFTEVDGVR…PIPPPRRKRT (213 aa)). Positions 2135–2139 (PVCKP) are interaction with non-structural protein 4A. Residues 2187–2219 (KRRLARGSPPSLASSSASQLSAPSLKATCTTHH) form a disordered region. Residues 2189–2441 (RLARGSPPSL…PCAAEESKLP (253 aa)) are interaction with host SKP2. Position 2194 is a phosphoserine; by host; in p56 (Ser-2194). Low complexity predominate over residues 2194-2211 (SPPSLASSSASQLSAPSL). A phosphoserine; by host; in p58 mark is found at Ser-2197, Ser-2201, Ser-2204, Ser-2207, and Ser-2210. ISDR regions lie at residues 2206–2245 (LSAPSLKATCTTHHDSPDADLIEANLLWRQEMGGNITRVE) and 2210–2249 (SLKATCTTHHDSPDADLIEANLLWRQEMGGNITRVESENK). The interval 2210–2275 (SLKATCTTHH…REISVPAEIL (66 aa)) is EIF2AK2/PKR-binding. An NS4B-binding region spans residues 2249–2306 (KVVILDSFDPIRAVEDEREISVPAEILRKPRKFPPALPIWARPDYNPPLLESWKDPDY). An SH3-binding motif is present at residues 2322–2325 (PPIP). Positions 2326 to 2334 (PPRRKRTVV) match the Nuclear localization signal motif. An interaction with host IFI27 region spans residues 2332–2441 (TVVLTESTVS…PCAAEESKLP (110 aa)). Lys-2350 participates in a covalent cross-link: Glycyl lysine isopeptide (Lys-Gly) (interchain with G-Cter in ubiquitin). A compositionally biased stretch (polar residues) spans 2351-2365 (TFGSSGSSAVDSGTA). The segment at 2351 to 2408 (TFGSSGSSAVDSGTATGPPDQASDDGDKGSDVESYSSMPPLEGEPGDPDLSDGSWSTV) is disordered. The tract at residues 2354–2377 (SSGSSAVDSGTATGPPDQASDDGD) is V3. 2 positions are modified to phosphoserine; by host: Ser-2448 and Ser-2461. A RdRp catalytic domain is found at 2633–2751 (PMGFSYDTRC…ICESAGTQED (119 aa)). Mg(2+) contacts are provided by Asp-2639, Asp-2737, and Asp-2738. The chain crosses the membrane as a helical span at residues 2990-3010 (WFMLCLLLLSVGVGIYLLPNR).

It belongs to the hepacivirus polyprotein family. In terms of assembly, homooligomer. Interacts with E1 (via C-terminus). Interacts with the non-structural protein 5A. Interacts (via N-terminus) with host STAT1 (via SH2 domain); this interaction results in decreased STAT1 phosphorylation and ubiquitin-mediated proteasome-dependent STAT1 degradation, leading to decreased IFN-stimulated gene transcription. Interacts with host STAT3; this interaction constitutively activates STAT3. Interacts with host LTBR receptor. Interacts with host TNFRSF1A receptor and possibly induces apoptosis. Interacts with host HNRPK. Interacts with host YWHAE. Interacts with host UBE3A/E6AP. Interacts with host DDX3X. Interacts with host APOA2. Interacts with host RXRA protein. Interacts with host SP110 isoform 3/Sp110b; this interaction sequesters the transcriptional corepressor SP110 away from the nucleus. Interacts with host CREB3 nuclear transcription protein; this interaction triggers cell transformation. Interacts with host ACY3. Interacts with host C1QR1. Interacts with host RBM24; this interaction, which enhances the interaction of the mature core protein with 5'-UTR, may inhibit viral translation and favor replication. Interacts with host EIF2AK2/PKR; this interaction induces the autophosphorylation of EIF2AK2. Part of the viral assembly initiation complex composed of NS2, E1, E2, NS3, NS4A, NS5A and the mature core protein. As to quaternary structure, forms a heterodimer with envelope glycoprotein E2. Interacts with mature core protein. Interacts with protease NS2. The heterodimer E1/E2 interacts with host CLDN1; this interaction plays a role in viral entry into host cell. Interacts with host SPSB2 (via C-terminus). Part of the viral assembly initiation complex composed of NS2, E1, E2, NS3, NS4A, NS5A and the mature core protein. Interacts with host NEURL3; this interaction prevents E1 binding to glycoprotein E2. Forms a heterodimer with envelope glycoprotein E1. Interacts with host CD81 and SCARB1 receptors; these interactions play a role in viral entry into host cell. Interacts with host EIF2AK2/PKR; this interaction inhibits EIF2AK2 and probably allows the virus to evade the innate immune response. Interacts with host CD209/DC-SIGN and CLEC4M/DC-SIGNR. Interact with host SPCS1; this interaction is essential for viral particle assembly. Interacts with protease NS2. The heterodimer E1/E2 interacts with host CLDN1; this interaction plays a role in viral entry into host cell. Part of the viral assembly initiation complex composed of NS2, E1, E2, NS3, NS4A, NS5A and the mature core protein. Interacts with host SLC3A2/4F2hc; the interaction may facilitate viral entry into host cell. Interacts with human PLSCR1. In terms of assembly, homohexamer. Homoheptamer. Interacts with protease NS2. As to quaternary structure, homodimer. Interacts with host SPCS1; this interaction is essential for viral particle assembly. Interacts with envelope glycoprotein E1. Interacts with envelope glycoprotein E2. Interacts with viroporin p7. Interacts with serine protease/helicase NS3. Part of the replication complex composed of NS2, NS3, NS4A, NS4B, NS5A and the RNA-directed RNA polymerase embedded in an ER-derived membranous web. Part of the viral assembly initiation complex composed of NS2, E1, E2, NS3, NS4A, NS5A and the mature core protein. Interacts with protease NS2. Interacts with non-structural protein 4A; this interaction stabilizes the folding of NS3 serine protease. NS3-NS4A interaction is essential for NS3 activation and allows membrane anchorage of the latter. NS3/NS4A complex also prevents phosphorylation of host IRF3, thus preventing the establishment of dsRNA induced antiviral state. Interacts with host MAVS; this interaction leads to the cleavage and inhibition of host MAVS. Interacts with host TICAM1; this interaction leads to the cleavage and inhibition of host TICAM1. Interacts with host TANK-binding kinase/TBK1; this interaction results in the inhibition of the association between TBK1 and IRF3, which leads to the inhibition of IRF3 activation. Interacts with host RBM24. Part of the replication complex composed of NS2, NS3, NS4A, NS4B, NS5A and the RNA-directed RNA polymerase embedded in an ER-derived membranous web. Part of the viral assembly initiation complex composed of NS2, E1, E2, NS3, NS4A, NS5A and the mature core protein. In terms of assembly, interacts with NS3 serine protease; this interaction stabilizes the folding of NS3 serine protease. NS3-NS4A interaction is essential for NS3 activation and allows membrane anchorage of the latter. Interacts with non-structural protein 5A (via N-terminus). Part of the replication complex composed of NS2, NS3, NS4A, NS4B, NS5A and the RNA-directed RNA polymerase embedded in an ER-derived membranous web. Part of the viral assembly initiation complex composed of NS2, E1, E2, NS3, NS4A, NS5A and the mature core protein. As to quaternary structure, homomultimer. Interacts with non-structural protein NS5A. Interacts with host PLA2G4C; this interaction likely initiates the recruitment of replication complexes to lipid droplets. Interacts with host STING; this interaction disrupts the interaction between STING and TBK1 thereby suppressing the interferon signaling. Part of the replication complex composed of NS2, NS3, NS4A, NS4B, NS5A and the RNA-directed RNA polymerase embedded in an ER-derived membranous web. Monomer. Homodimer; dimerization is required for RNA-binding. Interacts with the mature core protein. Interacts (via N-terminus) with non-structural protein 4A. Interacts with non-structural protein 4B. Interacts with RNA-directed RNA polymerase. Part of the viral assembly initiation complex composed of NS2, E1, E2, NS3, NS4A, NS5A and the mature core protein. Part of the replication complex composed of NS2, NS3, NS4A, NS4B, NS5A and the RNA-directed RNA polymerase. Interacts with host GRB2. Interacts with host BIN1. Interacts with host PIK3R1. Interacts with host SRCAP. Interacts with host FKBP8. Interacts with host VAPB. Interacts with host EIF2AK2/PKR; this interaction leads to disruption of EIF2AK2 dimerization by NS5A and probably allows the virus to evade the innate immune response. Interacts (via N-terminus) with host PACSIN2 (via N-terminus); this interaction attenuates protein kinase C alpha-mediated phosphorylation of PACSIN2 by disrupting the interaction between PACSIN2 and PRKCA. Interacts (via N-terminus) with host SRC kinase (via SH2 domain). Interacts with most Src-family kinases. Interacts with host IFI27 and SKP2; promotes the ubiquitin-mediated proteasomal degradation of NS5A. Interacts with host GPS2. Interacts with host TNFRSF21; this interaction allows the modulation by the virus of JNK, p38 MAPK, STAT3, and Akt signaling pathways in a DR6-dependent manner. Interacts (via N-terminus) with host CIDEB (via N-terminus); this interaction seems to regulate the association of HCV particles with APOE. Interacts with host CHKA/Choline Kinase-alpha; CHKA bridges host PI4KA and NS5A and potentiates NS5A-stimulated PI4KA activity, which then facilitates the targeting of the ternary complex to the ER for viral replication. Interacts with host SPSB2 (via C-terminus); this interaction targets NS5A for ubiquitination and degradation. Interacts with host RAB18; this interaction may promote the association of NS5A and other replicase components with lipid droplets. Interacts (via region D2) with host PPIA/CYPA; the interaction stimulates RNA-binding ability of NS5A and is dependent on the peptidyl-prolyl cis-trans isomerase activity of PPIA/CYPA. Interacts with host TRIM14; this interaction induces the degradation of NS5A. In terms of assembly, homooligomer. Interacts with non-structural protein 5A. Interacts with host VAPB. Interacts with host PRK2/PKN2. Interacts with host HNRNPA1 and SEPT6; these interactions facilitate the viral replication. Part of the replication complex composed of NS2, NS3, NS4A, NS4B, NS5A and the RNA-directed RNA polymerase. Zn(2+) serves as cofactor. Mg(2+) is required as a cofactor. In terms of processing, specific enzymatic cleavages in vivo yield mature proteins. The structural proteins, core, E1, E2 and p7 are produced by proteolytic processing by host signal peptidases. The core protein is synthesized as a 23 kDa precursor which is retained in the ER membrane through the hydrophobic signal peptide. Cleavage by the signal peptidase releases the 21 kDa mature core protein. The cleavage of the core protein precursor occurs between aminoacids 176 and 188 but the exact cleavage site is not known. Some degraded forms of the core protein appear as well during the course of infection. The other proteins (p7, NS2, NS3, NS4A, NS4B, NS5A and NS5B) are cleaved by the viral proteases. Autoprocessing between NS2 and NS3 is mediated by the NS2 cysteine protease catalytic domain and regulated by the NS3 N-terminal domain. Post-translationally, phosphorylated by host PKC and PKA. Ubiquitinated; mediated by UBE3A and leading to core protein subsequent proteasomal degradation. In terms of processing, highly N-glycosylated. Post-translationally, palmitoylation is required for NS2/3 autoprocessing and E2 recruitment to membranes. Palmitoylated. This modification may play a role in its polymerization or in protein-protein interactions. In terms of processing, cleaved by host caspases which are probably activated by the viral infection. Post-translationally, ubiquitinated. Ubiquitination, most probably at Lys-2350, mediated by host IFI27 and SKP2 leads to proteasomal degradation, restricting viral infection. Phosphorylated on serines in a basal form termed p56. p58 is a hyperphosphorylated form of p56. p56 and p58 coexist in the cell in roughly equivalent amounts. Hyperphosphorylation is dependent on the presence of NS4A. Host CSNK1A1/CKI-alpha or RPS6KB1 kinases may be responsible for NS5A phosphorylation. Phosphorylated NS5A is involved in viral replication. In terms of processing, tyrosine phosphorylation is essential for the interaction with host SRC. Post-translationally, the N-terminus is phosphorylated by host PRK2/PKN2.

It is found in the host endoplasmic reticulum membrane. It localises to the host mitochondrion membrane. The protein resides in the virion. The protein localises to the host cytoplasm. Its subcellular location is the host nucleus. It is found in the host lipid droplet. It localises to the virion membrane. The protein resides in the host mitochondrion. The protein localises to the host cell membrane. Its subcellular location is the host perinuclear region. It carries out the reaction Hydrolysis of four peptide bonds in the viral precursor polyprotein, commonly with Asp or Glu in the P6 position, Cys or Thr in P1 and Ser or Ala in P1'.. It catalyses the reaction a ribonucleoside 5'-triphosphate + H2O = a ribonucleoside 5'-diphosphate + phosphate + H(+). The enzyme catalyses ATP + H2O = ADP + phosphate + H(+). The catalysed reaction is RNA(n) + a ribonucleoside 5'-triphosphate = RNA(n+1) + diphosphate. With respect to regulation, inhibited by the antiviral drug hexamethylene amiloride. Inhibition by amantadine appears to be genotype-dependent. Also inhibited by long-alkyl-chain iminosugar derivatives. Its activity is regulated as follows. Activity is up-regulated by PRK2/PKN2-mediated phosphorylation. Functionally, packages viral RNA to form a viral nucleocapsid, and promotes virion budding. Participates in the viral particle production as a result of its interaction with the non-structural protein 5A. Binds RNA and may function as a RNA chaperone to induce the RNA structural rearrangements taking place during virus replication. Modulates viral translation initiation by interacting with viral IRES and 40S ribosomal subunit. Affects various cell signaling pathways, host immunity and lipid metabolism. Prevents the establishment of cellular antiviral state by blocking the interferon-alpha/beta (IFN-alpha/beta) and IFN-gamma signaling pathways and by blocking the formation of phosphorylated STAT1 and promoting ubiquitin-mediated proteasome-dependent degradation of STAT1. Activates STAT3 leading to cellular transformation. Regulates the activity of cellular genes, including c-myc and c-fos. May repress the promoter of p53, and sequester CREB3 and SP110 isoform 3/Sp110b in the cytoplasm. Represses cell cycle negative regulating factor CDKN1A, thereby interrupting an important check point of normal cell cycle regulation. Targets transcription factors involved in the regulation of inflammatory responses and in the immune response: suppresses NF-kappa-B activation, and activates AP-1. Binds to dendritic cells (DCs) via C1QR1, resulting in down-regulation of T-lymphocytes proliferation. Alters lipid metabolism by interacting with hepatocellular proteins involved in lipid accumulation and storage. Induces up-regulation of FAS promoter activity, and thereby contributes to the increased triglyceride accumulation in hepatocytes (steatosis). Its function is as follows. Forms a heterodimer with envelope glycoprotein E2, which mediates virus attachment to the host cell, virion internalization through clathrin-dependent endocytosis and fusion with host membrane. Fusion with the host cell is most likely mediated by both E1 and E2, through conformational rearrangements of the heterodimer required for fusion rather than a classical class II fusion mechanism. E1/E2 heterodimer binds host apolipoproteins such as APOB and APOE thereby forming a lipo-viro-particle (LVP). APOE associated to the LVP allows the initial virus attachment to cell surface receptors such as the heparan sulfate proteoglycans (HSPGs), syndecan-1 (SDC1), syndecan-1 (SDC2), the low-density lipoprotein receptor (LDLR) and scavenger receptor class B type I (SCARB1). The cholesterol transfer activity of SCARB1 allows E2 exposure and binding of E2 to SCARB1 and the tetraspanin CD81. E1/E2 heterodimer binding on CD81 activates the epithelial growth factor receptor (EGFR) signaling pathway. Diffusion of the complex E1-E2-EGFR-SCARB1-CD81 to the cell lateral membrane allows further interaction with Claudin 1 (CLDN1) and occludin (OCLN) to finally trigger HCV entry. In terms of biological role, forms a heterodimer with envelope glycoprotein E1, which mediates virus attachment to the host cell, virion internalization through clathrin-dependent endocytosis and fusion with host membrane. Fusion with the host cell is most likely mediated by both E1 and E2, through conformational rearrangements of the heterodimer required for fusion rather than a classical class II fusion mechanism. The interaction between envelope glycoprotein E2 and host apolipoprotein E/APOE allows the proper assembly, maturation and infectivity of the viral particles. This interaction is probably promoted via the up-regulation of cellular autophagy by the virus. E1/E2 heterodimer binds host apolipoproteins such as APOB and APOE thereby forming a lipo-viro-particle (LVP). APOE associated to the LVP allows the initial virus attachment to cell surface receptors such as the heparan sulfate proteoglycans (HSPGs), syndecan-1 (SDC1), syndecan-1 (SDC2), the low-density lipoprotein receptor (LDLR) and scavenger receptor class B type I (SCARB1). The cholesterol transfer activity of SCARB1 allows E2 exposure and binding of E2 to SCARB1 and the tetraspanin CD81. E1/E2 heterodimer binding on CD81 activates the epithelial growth factor receptor (EGFR) signaling pathway. Diffusion of the complex E1-E2-EGFR-SCARB1-CD81 to the cell lateral membrane allows further interaction with Claudin 1 (CLDN1) and occludin (OCLN) to finally trigger HCV entry. Inhibits host EIF2AK2/PKR activation, preventing the establishment of an antiviral state. Viral ligand for CD209/DC-SIGN and CLEC4M/DC-SIGNR, which are respectively found on dendritic cells (DCs), and on liver sinusoidal endothelial cells and macrophage-like cells of lymph node sinuses. These interactions allow the capture of circulating HCV particles by these cells and subsequent facilitated transmission to permissive cells such as hepatocytes and lymphocyte subpopulations. The interaction between E2 and host amino acid transporter complex formed by SLC3A2 and SLC7A5/LAT1 may facilitate viral entry into host cell. Ion channel protein that acts as a viroporin and plays an essential role in the assembly, envelopment and secretion of viral particles. Regulates the host cell secretory pathway, which induces the intracellular retention of viral glycoproteins and favors assembly of viral particles. Creates a pore in acidic organelles and releases Ca(2+) and H(+) in the cytoplasm of infected cells, leading to a productive viral infection. High levels of cytoplasmic Ca(2+) may trigger membrane trafficking and transport of viral ER-associated proteins to viroplasms, sites of viral genome replication. This ionic imbalance induces the assembly of the inflammasome complex, which triggers the maturation of pro-IL-1beta into IL-1beta through the action of caspase-1. Targets also host mitochondria and induces mitochondrial depolarization. In addition of its role as a viroporin, acts as a lipid raft adhesion factor. Functionally, cysteine protease required for the proteolytic auto-cleavage between the non-structural proteins NS2 and NS3. The N-terminus of NS3 is required for the function of NS2 protease (active region NS2-3). Promotes the initiation of viral particle assembly by mediating the interaction between structural and non-structural proteins. Its function is as follows. Displays three enzymatic activities: serine protease with a chymotrypsin-like fold, NTPase and RNA helicase. NS3 serine protease, in association with NS4A, is responsible for the cleavages of NS3-NS4A, NS4A-NS4B, NS4B-NS5A and NS5A-NS5B. The NS3/NS4A complex prevents phosphorylation of host IRF3, thus preventing the establishment of dsRNA induced antiviral state. The NS3/NS4A complex induces host amino acid transporter component SLC3A2, thus contributing to HCV propagation. NS3 RNA helicase binds to RNA and unwinds both dsDNA and dsRNA in the 3' to 5' direction, and likely resolves RNA complicated stable secondary structures in the template strand. Binds a single ATP and catalyzes the unzipping of a single base pair of dsRNA. Inhibits host antiviral proteins TBK1 and IRF3 thereby preventing the establishment of an antiviral state. Cleaves host MAVS/CARDIF thereby preventing the establishment of an antiviral state. Cleaves host TICAM1/TRIF, thereby disrupting TLR3 signaling and preventing the establishment of an antiviral state. In terms of biological role, peptide cofactor which forms a non-covalent complex with the N-terminal of NS3 serine protease. The NS3/NS4A complex prevents phosphorylation of host IRF3, thus preventing the establishment of dsRNA induced antiviral state. The NS3/NS4A complex induces host amino acid transporter component SLC3A2, thus contributing to HCV propagation. Induces a specific membrane alteration that serves as a scaffold for the virus replication complex. This membrane alteration gives rise to the so-called ER-derived membranous web that contains the replication complex. NS4B self-interaction contributes to its function in membranous web formation. Promotes host TRIF protein degradation in a CASP8-dependent manner thereby inhibiting host TLR3-mediated interferon signaling. Disrupts the interaction between STING and TBK1 contributing to the inhibition of interferon signaling. Functionally, phosphorylated protein that is indispensable for viral replication and assembly. Both hypo- and hyperphosphorylated states are required for the viral life cycle. The hyperphosphorylated form of NS5A is an inhibitor of viral replication. Involved in RNA-binding and especially in binding to the viral genome. Zinc is essential for RNA-binding. Participates in the viral particle production as a result of its interaction with the mature viral core protein. Its interaction with host VAPB may target the viral replication complex to vesicles. Down-regulates viral IRES translation initiation. Mediates interferon resistance, presumably by interacting with and inhibiting host EIF2AK2/PKR. Prevents BIN1-induced apoptosis. Acts as a transcriptional activator of some host genes important for viral replication when localized in the nucleus. Via the interaction with host PACSIN2, modulates lipid droplet formation in order to promote virion assembly. Modulates TNFRSF21/DR6 signaling pathway for viral propagation. Its function is as follows. RNA-dependent RNA polymerase that performs primer-template recognition and RNA synthesis during viral replication. Initiates RNA transcription/replication at a flavin adenine dinucleotide (FAD), resulting in a 5'- FAD cap on viral RNAs. In this way, recognition of viral 5' RNA by host pattern recognition receptors can be bypassed, thereby evading activation of antiviral pathways. The polypeptide is Genome polyprotein (Hepatitis C virus genotype 1b (isolate Japanese) (HCV)).